Here is a 507-residue protein sequence, read N- to C-terminus: MVNIRPDEISSIIRKQIEQYNQEVKIVNIGTVLQVGDGIARIYGLDKVMAGELVEFEDGTVGIALNLESDNVGAVLMGDGLTIQEGSSVKATGKIAQIPVSDAYLGRVVNALAQPIDGKGQIPASEFRLIESPAPGIISRRSVYEPMQTGLIAIDSMIPIGRGQRELIIGDRQTGKTAVAIDTILNQKGQNVVCVYVAIGQKASSVAQVVNTFEDRGALEYTIVVAETANSPATLQYLAPYTGAALAEYFMYRKQHTLIIYDDLSKQAQAYRQMSLLLRRPPGREAYPGDVFYLHSRLLERAAKLSSNLGEGSMTALPIVETQAGDVSAYIPTNVISITDGQIFLSADLFNAGIRPAINVGISVSRVGSAAQIKAMKQVAGKLKLELAQFAELEAFAQFASDLDKATQNQLARGQRLRELLKQSQSAPLSVEEQIATIYTGVNGYLDVLETGQVKKFLIQLREYLVTNKPQFAEIIRSTKVFTEQAENLLKEAITEHIELFLFQEEK.

An ATP-binding site is contributed by G170–T177.

The protein belongs to the ATPase alpha/beta chains family. F-type ATPases have 2 components, CF(1) - the catalytic core - and CF(0) - the membrane proton channel. CF(1) has five subunits: alpha(3), beta(3), gamma(1), delta(1), epsilon(1). CF(0) has four main subunits: a, b, b' and c.

It localises to the plastid. Its subcellular location is the chloroplast thylakoid membrane. The enzyme catalyses ATP + H2O + 4 H(+)(in) = ADP + phosphate + 5 H(+)(out). In terms of biological role, produces ATP from ADP in the presence of a proton gradient across the membrane. The alpha chain is a regulatory subunit. The polypeptide is ATP synthase subunit alpha, chloroplastic (Marchantia polymorpha (Common liverwort)).